The chain runs to 64 residues: DNA-binding protein 7b (64 aa).

Belongs to the 7 kDa DNA-binding/endoribonuclease P2 family. In terms of assembly, monomer.

The protein localises to the cytoplasm. Can constrain negative DNA supercoils. May be involved in maintaining the integrity of the genome at high temperature. This Saccharolobus islandicus (strain HVE10/4) (Sulfolobus islandicus) protein is DNA-binding protein 7b.